The sequence spans 207 residues: Large ribosomal subunit protein uL4 (207 aa).

The interval 44–85 (MRQGTHKTKNRAEVSGGGRKPWRQKGTGRARQGSIRSPQWRG) is disordered.

This sequence belongs to the universal ribosomal protein uL4 family. In terms of assembly, part of the 50S ribosomal subunit.

Its function is as follows. One of the primary rRNA binding proteins, this protein initially binds near the 5'-end of the 23S rRNA. It is important during the early stages of 50S assembly. It makes multiple contacts with different domains of the 23S rRNA in the assembled 50S subunit and ribosome. Functionally, forms part of the polypeptide exit tunnel. This Geobacillus thermodenitrificans (strain NG80-2) protein is Large ribosomal subunit protein uL4.